We begin with the raw amino-acid sequence, 148 residues long: Urease accessory protein UreE (148 aa).

It belongs to the UreE family.

It is found in the cytoplasm. Involved in urease metallocenter assembly. Binds nickel. Probably functions as a nickel donor during metallocenter assembly. The chain is Urease accessory protein UreE from Aliarcobacter butzleri (strain RM4018) (Arcobacter butzleri).